The primary structure comprises 566 residues: Arginine--tRNA ligase (566 aa).

Positions 129–139 match the 'HIGH' region motif; that stretch reads ANPTGPLHIGH.

This sequence belongs to the class-I aminoacyl-tRNA synthetase family. In terms of assembly, monomer.

The protein localises to the cytoplasm. It catalyses the reaction tRNA(Arg) + L-arginine + ATP = L-arginyl-tRNA(Arg) + AMP + diphosphate. The protein is Arginine--tRNA ligase of Wolbachia pipientis subsp. Culex pipiens (strain wPip).